Reading from the N-terminus, the 319-residue chain is Free fatty acid receptor 3 (319 aa).

The Extracellular portion of the chain corresponds to 1–15; sequence MGTSFFLGNYWLFFS. The helical transmembrane segment at 16-36 threads the bilayer; it reads VYLLVFLVGLPLNVMALVVFV. The Cytoplasmic segment spans residues 37 to 43; that stretch reads GKLRRRP. A helical transmembrane segment spans residues 44-64; sequence VAVDLLLLNLTISDLLLLLFL. Residues 65–98 lie on the Extracellular side of the membrane; it reads PFRMVEAACGMRWLLPFIFCPLSGFLFFTTIYLT. Residues cysteine 84 and cysteine 165 are joined by a disulfide bond. Residues 99-119 traverse the membrane as a helical segment; it reads SLFLTAVSIERFLSVAYPLWY. Residues 120–127 are Cytoplasmic-facing; that stretch reads KTRPRLAQ. The helical transmembrane segment at 128–148 threads the bilayer; that stretch reads AGLVSVVCWFLASAHCSVVYI. Topologically, residues 149 to 183 are extracellular; sequence TEYWGNATYSQGTNGTCYLEFREDQLAILLPVRLE. Asparagine 154 and asparagine 162 each carry an N-linked (GlcNAc...) asparagine glycan. Residues 184 to 206 form a helical membrane-spanning segment; that stretch reads MAVVLFMVPLCITSYCYSRLVWI. Over 207 to 218 the chain is Cytoplasmic; that stretch reads LSRGASRRRRKR. Residues 219–239 form a helical membrane-spanning segment; the sequence is IMGLLAATLLIFFVCFGPYNM. Topologically, residues 240–254 are extracellular; the sequence is SHVVGYVSRESPSWR. A helical membrane pass occupies residues 255 to 275; sequence SYVLLLSTLNSCIDPLVFYFS. At 276–319 the chain is on the cytoplasmic side; it reads SSKFQADFHQLLGRLLRTCVPWTQQVSLELKVKNGEEPSKECPS.

Belongs to the G-protein coupled receptor 1 family. In terms of tissue distribution, expressed in white adipose tissue and skeletal muscle (at protein level). Abundantly expressed in sympathetic ganglia such as the superior cervical ganglion. Also expressed by intestinal endocrine cells.

The protein resides in the cell membrane. Functionally, g protein-coupled receptor that is activated by a major product of dietary fiber digestion, the short chain fatty acids (SCFAs), and that plays a role in the regulation of whole-body energy homeostasis and in intestinal immunity. In omnivorous mammals, the short chain fatty acids acetate, propionate and butyrate are produced primarily by the gut microbiome that metabolizes dietary fibers. SCFAs serve as a source of energy but also act as signaling molecules. That G protein-coupled receptor is probably coupled to the pertussis toxin-sensitive, G(i/o)-alpha family of G proteins. Its activation results in the formation of inositol 1,4,5-trisphosphate, the mobilization of intracellular calcium, the phosphorylation of the MAPK3/ERK1 and MAPK1/ERK2 kinases and the inhibition of intracellular cAMP accumulation. Activated by SCFAs and by beta-hydroxybutyrate, a ketone body produced by the liver upon starvation, it inhibits N-type calcium channels and modulates the activity of sympathetic neurons through a signaling cascade involving the beta and gamma subunits of its coupled G protein, phospholipase C and MAP kinases. Thereby, it may regulate energy expenditure through the control of the sympathetic nervous system that controls for instance heart rate. Upon activation by SCFAs accumulating in the intestine, it may also signal to the brain via neural circuits which in turn would regulate intestinal gluconeogenesis. May also control the production of hormones involved in whole-body energy homeostasis. May for instance, regulate blood pressure through renin secretion. May also regulate secretion of the PYY peptide by enteroendocrine cells and control gut motility, intestinal transit rate, and the harvesting of energy from SCFAs produced by gut microbiota. May also indirectly regulate the production of LEP/Leptin, a hormone acting on the CNS to inhibit food intake, in response to the presence of short-chain fatty acids in the intestine. Finally, may also play a role in glucose homeostasis. Besides its role in energy homeostasis, may play a role in intestinal immunity. May mediate the activation of the inflammatory and immune response by SCFAs in the gut, regulating the rapid production of chemokines and cytokines by intestinal epithelial cells. Exhibits an SCFA-independent constitutive G protein-coupled receptor activity. This Mus musculus (Mouse) protein is Free fatty acid receptor 3 (Ffar3).